The sequence spans 759 residues: MKKKIESYQGAAGGWGAVKSVANAVRKQMDIRQDVIAMFDMNKPEGFDCPGCAWPDPKHSASFDICENGAKAIAWEVTDKQVNASFFAENTVQSLLTWGDHELEAAGRLTQPLKYDDVSDCYKPLSWQQAFDEIGARLQSYSDPNQVEFYTSGRTSNEAAFLYQLFAREYRSNNFPDCSNMCHEPTSVGLAASIGVGKGTVLLEDFEKCDLVICIGHNPGTNHPRMLTSLRALVKRGAKMIAINPLQERGLERFTAPQNPFEMLTNSETQLASAYYNVRIGGDMALLKGMMRLLIERDDAASAAGRPSLLDDEFIQTHTVGFDELRRDVLNSEWKDIERISGLSQTQIAELADAYAAAERTIICYGMGITQHEHGTQNVQQLVNLLLMKGNIGKPGAGICPLRGHSNVQGDRTVGITEKPSAEFLDRLCERYGFTPPHAPGHAAIASMQAICTGQARALICMGGNFALAMPDREASAVPLTQLDLAVHVATKLNRSHLLTARHSYILPVLGRSEIDMQKSGAQAVTVEDSMSMIHASRGVLKPAGVMLKSECAVVAGIAQAALPQSVVAWEYLVEDYDRIRNDIEAVLPEFADYNQRIRHPGGFHLINAAAERRWMTSSGKANFITSKGLLEDPSSAFNSKLVMATVRSHDQYNTTIYGMDDRYRGVFGQRDVVFMSAKQAKICRVKNGERVNLIALTPDGKRSSRRMDRLKVVIYPMADRSLVTYFPESNHMLTLDNHDPLSGIPGYKSIPVELEPSN.

[4Fe-4S] cluster contacts are provided by cysteine 49 and cysteine 52.

The protein belongs to the prokaryotic molybdopterin-containing oxidoreductase family. It depends on [4Fe-4S] cluster as a cofactor. Mo-bis(molybdopterin guanine dinucleotide) is required as a cofactor.

In terms of biological role, probably involved in acid resistance. This Escherichia coli O6:H1 (strain CFT073 / ATCC 700928 / UPEC) protein is Protein YdeP (ydeP).